We begin with the raw amino-acid sequence, 335 residues long: Protein-lysine N-methyltransferase EEF2KMT (335 aa).

An N-acetylmethionine modification is found at Met1. S-adenosyl-L-methionine contacts are provided by residues Trp139, 165–167 (GSG), Trp228, and Ala247.

This sequence belongs to the class I-like SAM-binding methyltransferase superfamily. EEF2KMT family. As to quaternary structure, interacts with FAM86B2 and FAM86C1P.

It is found in the cytoplasm. The catalysed reaction is L-lysyl-[protein] + 3 S-adenosyl-L-methionine = N(6),N(6),N(6)-trimethyl-L-lysyl-[protein] + 3 S-adenosyl-L-homocysteine + 3 H(+). Catalyzes the trimethylation of eukaryotic elongation factor 2 (EEF2) on 'Lys-525'. This chain is Protein-lysine N-methyltransferase EEF2KMT (Eef2kmt), found in Mus musculus (Mouse).